Reading from the N-terminus, the 528-residue chain is Putative galacturonosyltransferase 2 (528 aa).

It belongs to the glycosyltransferase 8 family.

Its pathway is glycan metabolism; pectin biosynthesis. Its function is as follows. May be involved in pectin and/or xylans biosynthesis in cell walls. This Arabidopsis thaliana (Mouse-ear cress) protein is Putative galacturonosyltransferase 2 (GAUT2).